Consider the following 105-residue polypeptide: Replication initiation control protein YabA (105 aa).

Positions 79, 81, 95, and 98 each coordinate Zn(2+).

This sequence belongs to the YabA family. Homotetramer. Interacts with both DnaA and DnaN, acting as a bridge between these two proteins. Requires Zn(2+) as cofactor.

Its subcellular location is the cytoplasm. It is found in the nucleoid. In terms of biological role, involved in control of chromosome replication initiation. Inhibits the cooperative binding of DnaA to the oriC region, thus negatively regulating initiation of chromosome replication. Inhibits the ability of DnaA-ATP to form a helix on DNA; does not disassemble preformed DnaA-DNA helices. Decreases the residence time of DnaA on the chromosome at its binding sites (oriC, replication forks and promoter-binding sites). Tethers DnaA to the replication machinery via the DNA polymerase beta sliding clamp subunit (dnaN). Associates with oriC and other DnaA targets on the chromosome in a DnaA-dependent manner. The protein is Replication initiation control protein YabA of Streptococcus sanguinis (strain SK36).